The primary structure comprises 437 residues: UDP-glucuronate 4-epimerase 4 (437 aa).

Residues 30–50 form a helical membrane-spanning segment; sequence SLTKFAFFSFFLLCLISLLFL. The segment at 56–76 is disordered; sequence INPSSPSDPSRRSLRTNTYGG. The helical transmembrane segment at 96 to 116 threads the bilayer; it reads GITVLVTGAAGFVGTHVSAAL. 98–129 serves as a coordination point for NAD(+); it reads TVLVTGAAGFVGTHVSAALKRRGDGVIGLDNF. The Proton acceptor role is filled by tyrosine 248.

This sequence belongs to the NAD(P)-dependent epimerase/dehydratase family. As to quaternary structure, homodimer. In terms of tissue distribution, in roots, leaves, siliques, flowers, pollen and stems.

Its subcellular location is the golgi apparatus. It is found in the golgi stack membrane. The enzyme catalyses UDP-alpha-D-glucuronate = UDP-alpha-D-galacturonate. Its activity is regulated as follows. Activated by glycerol, not effected by dimethyl sulfoxide and inhibited by high concentration of monovalent salts, UDP-xylose, UDP-arabinose or UDP. Functionally, involved in the synthesis of the negatively charged monosaccharide that forms the backbone of pectic cell wall components. The protein is UDP-glucuronate 4-epimerase 4 (GAE4) of Arabidopsis thaliana (Mouse-ear cress).